A 296-amino-acid polypeptide reads, in one-letter code: MNSNYPLFWIKEILTNGFVENILYIFIIMAFLTGIYSIIANLIKFVINYINIKITKIITLIENWLKKSDSSFVYFILLLYLLLNIHISLNFVLYFRIVILGFISIKNMEISTLISFIDYISEIIANIIDRNTLKMGGTDSDSNPLSHVYEFASKSSKPKEVEKAIPNLPENVPKYPGKIVKPVPNNLLEKRGLSSMSVEMPSNTTNPSDIERLNNLLEDIKKSLELYDNQSLKFRKHISEVNNNDPNCVYDPRSKELFKDYIKLVDLLKDQQKDMGNKIINELKNIDPNIKHKYFK.

The protein localises to the mitochondrion. This is an uncharacterized protein from Podospora anserina (strain S / ATCC MYA-4624 / DSM 980 / FGSC 10383) (Pleurage anserina).